Reading from the N-terminus, the 255-residue chain is MRFNMTTTLFSPAEFEQALRDKGRYYHIHHPYHIMMNDGHATKQQIQGWVANRFYYQVNIPLKDAAIMANCPDPATRRKWVQRILDHDGQHDDHGGIEAWLRLGEAVGLDRETILSQKMVLPSVRFAVDAYVNFARRACWQEAACSSLTELFAPAIHQSRLDTWPTHYPWIDAEGYAYFRGRLSQANRDVEHGLELALEYCNTVDRQQRMLNILQFKLDILWTILDGMSMAYVLERAPYHTVTQEAVWHQKGLLG.

The protein belongs to the PqqC family.

It carries out the reaction 6-(2-amino-2-carboxyethyl)-7,8-dioxo-1,2,3,4,7,8-hexahydroquinoline-2,4-dicarboxylate + 3 O2 = pyrroloquinoline quinone + 2 H2O2 + 2 H2O + H(+). It functions in the pathway cofactor biosynthesis; pyrroloquinoline quinone biosynthesis. In terms of biological role, ring cyclization and eight-electron oxidation of 3a-(2-amino-2-carboxyethyl)-4,5-dioxo-4,5,6,7,8,9-hexahydroquinoline-7,9-dicarboxylic-acid to PQQ. The polypeptide is Pyrroloquinoline-quinone synthase (Acinetobacter baylyi (strain ATCC 33305 / BD413 / ADP1)).